Consider the following 235-residue polypeptide: Pyridoxine/pyridoxamine 5'-phosphate oxidase (235 aa).

Residues 30 to 33 and K88 contribute to the substrate site; that span reads RQEY. Residues 83 to 88, 98 to 99, R104, K105, and Q127 contribute to the FMN site; these read RTVLLK and YT. Y145, R149, and S153 together coordinate substrate. FMN-binding positions include 162–163 and W207; that span reads QS. Residue 213-215 participates in substrate binding; sequence RLH. Residue R217 coordinates FMN.

It belongs to the pyridoxamine 5'-phosphate oxidase family. As to quaternary structure, homodimer. FMN serves as cofactor.

It catalyses the reaction pyridoxamine 5'-phosphate + O2 + H2O = pyridoxal 5'-phosphate + H2O2 + NH4(+). The catalysed reaction is pyridoxine 5'-phosphate + O2 = pyridoxal 5'-phosphate + H2O2. The protein operates within cofactor metabolism; pyridoxal 5'-phosphate salvage; pyridoxal 5'-phosphate from pyridoxamine 5'-phosphate: step 1/1. It functions in the pathway cofactor metabolism; pyridoxal 5'-phosphate salvage; pyridoxal 5'-phosphate from pyridoxine 5'-phosphate: step 1/1. Functionally, catalyzes the oxidation of either pyridoxine 5'-phosphate (PNP) or pyridoxamine 5'-phosphate (PMP) into pyridoxal 5'-phosphate (PLP). The polypeptide is Pyridoxine/pyridoxamine 5'-phosphate oxidase (Bacteroides fragilis (strain YCH46)).